Consider the following 615-residue polypeptide: DNA mismatch repair protein MutL (615 aa).

The interval 363 to 397 (FAEPAVREPVAPRYTPAPASGSRPAAPWPNAQPGY) is disordered. Over residues 378–391 (PAPASGSRPAAPWP) the composition is skewed to low complexity.

Belongs to the DNA mismatch repair MutL/HexB family.

Its function is as follows. This protein is involved in the repair of mismatches in DNA. It is required for dam-dependent methyl-directed DNA mismatch repair. May act as a 'molecular matchmaker', a protein that promotes the formation of a stable complex between two or more DNA-binding proteins in an ATP-dependent manner without itself being part of a final effector complex. The chain is DNA mismatch repair protein MutL from Escherichia coli O157:H7 (strain EC4115 / EHEC).